The following is a 462-amino-acid chain: ATP synthase subunit beta 2 (462 aa).

151–158 (GGAGVGKT) provides a ligand contact to ATP.

The protein belongs to the ATPase alpha/beta chains family. As to quaternary structure, F-type ATPases have 2 components, CF(1) - the catalytic core - and CF(0) - the membrane proton channel. CF(1) has five subunits: alpha(3), beta(3), gamma(1), delta(1), epsilon(1). CF(0) has three main subunits: a(1), b(2) and c(9-12). The alpha and beta chains form an alternating ring which encloses part of the gamma chain. CF(1) is attached to CF(0) by a central stalk formed by the gamma and epsilon chains, while a peripheral stalk is formed by the delta and b chains.

It localises to the cell inner membrane. The catalysed reaction is ATP + H2O + 4 H(+)(in) = ADP + phosphate + 5 H(+)(out). Its function is as follows. Produces ATP from ADP in the presence of a proton gradient across the membrane. The catalytic sites are hosted primarily by the beta subunits. The chain is ATP synthase subunit beta 2 from Chlorobaculum tepidum (strain ATCC 49652 / DSM 12025 / NBRC 103806 / TLS) (Chlorobium tepidum).